Here is a 339-residue protein sequence, read N- to C-terminus: Methylcobamide:CoM methyltransferase MtaA (339 aa).

Histidine 237, cysteine 239, and cysteine 316 together coordinate Zn(2+).

This sequence belongs to the uroporphyrinogen decarboxylase family. MtbA/mtaA subfamily. Zn(2+) is required as a cofactor.

The catalysed reaction is methyl-Co(III)-[methanol-specific corrinoid protein] + coenzyme M = Co(I)-[methanol-specific corrinoid protein] + methyl-coenzyme M + H(+). Methyltransferase involved in methanogenesis in the methanol pathway. Catalyzes the transfer of the methyl group from the methylated corrinoid protein MtaC to coenzyme M, forming the substrate for coenzyme-B sulfoethylthiotransferase. MtaC can be substituted by free cob(I)alamin in vitro. The protein is Methylcobamide:CoM methyltransferase MtaA (mtaA) of Methanosarcina barkeri.